Reading from the N-terminus, the 489-residue chain is Coiled-coil domain-containing protein 77 (489 aa).

S38 carries the post-translational modification Phosphoserine. 2 coiled-coil regions span residues 57-120 (SQEL…QVCL) and 212-487 (ERHQ…NALR).

The polypeptide is Coiled-coil domain-containing protein 77 (Ccdc77) (Mus musculus (Mouse)).